The chain runs to 175 residues: Bifunctional protein PyrR (175 aa).

Substrate is bound by residues 40-41, Arg-85, 102-110, Arg-135, and Val-159; these read TR and DDVLYTGRT. Positions 98-110 match the PRPP-binding motif; the sequence is VVIIDDVLYTGRT.

It belongs to the purine/pyrimidine phosphoribosyltransferase family. PyrR subfamily. Homodimer and homohexamer; in equilibrium.

The catalysed reaction is UMP + diphosphate = 5-phospho-alpha-D-ribose 1-diphosphate + uracil. Regulates transcriptional attenuation of the pyrimidine nucleotide (pyr) operon by binding in a uridine-dependent manner to specific sites on pyr mRNA. This disrupts an antiterminator hairpin in the RNA and favors formation of a downstream transcription terminator, leading to a reduced expression of downstream genes. Functionally, also displays a weak uracil phosphoribosyltransferase activity which is not physiologically significant. The sequence is that of Bifunctional protein PyrR from Staphylococcus epidermidis (strain ATCC 35984 / DSM 28319 / BCRC 17069 / CCUG 31568 / BM 3577 / RP62A).